The chain runs to 145 residues: Class I hydrophobin 1 (145 aa).

The first 18 residues, 1–18, serve as a signal peptide directing secretion; sequence MYASVIIYTLVALCGVMS. 4 cysteine pairs are disulfide-bonded: Cys-88–Cys-118, Cys-95–Cys-112, Cys-96–Cys-106, and Cys-119–Cys-128. An N-linked (GlcNAc...) asparagine glycan is attached at Asn-108.

Belongs to the fungal hydrophobin family. In terms of assembly, self-assembles to form functional amyloid fibrils called rodlets. Self-assembly into fibrillar rodlets occurs spontaneously at hydrophobic:hydrophilic interfaces and the rodlets further associate laterally to form amphipathic monolayers.

It localises to the secreted. It is found in the cell wall. Aerial growth, conidiation, and dispersal of filamentous fungi in the environment rely upon a capability of their secreting small amphipathic proteins called hydrophobins (HPBs) with low sequence identity. Class I can self-assemble into an outermost layer of rodlet bundles on aerial cell surfaces, conferring cellular hydrophobicity that supports fungal growth, development and dispersal; whereas Class II form highly ordered films at water-air interfaces through intermolecular interactions but contribute nothing to the rodlet structure. Hyd1 is a class I hydrophobin that is involved in plant root attachment and colonization, and that might also protect the growing hyphae from locally synthesized plant defense compounds during the first stages of cucumber interaction, allowing this opportunistic, non-pathogenic fungus to colonize the intercellular spaces of the plant root. The polypeptide is Class I hydrophobin 1 (Trichoderma asperellum (Filamentous fungus)).